The following is an 851-amino-acid chain: Periplasmic nitrate reductase (851 aa).

A signal peptide (tat-type signal) is located at residues 1-29 (MQSNRRDFLKAQALAASAAAAGIPIVVEA). Positions 44–100 (VRWDKAPCRFCGTGCAVMVGVQEGKVVATQGDPEAPVNRGLNCIKGYFLSKIMYGRD) constitute a 4Fe-4S Mo/W bis-MGD-type domain. Residues C51, C54, C58, and C86 each coordinate [4Fe-4S] cluster. Mo-bis(molybdopterin guanine dinucleotide) contacts are provided by residues K88, Q155, N180, C184, 217 to 224 (WGSNMAEM), 248 to 252 (STYEH), and 267 to 269 (QTD). Residues 317–338 (DATSNGYPGADGKPKGNPNDST) form a disordered region. Mo-bis(molybdopterin guanine dinucleotide) is bound by residues M388, Q392, N498, 524–525 (SD), K547, D574, and 741–750 (TGRVLEHWHT). Residue F817 participates in substrate binding. Positions 825 and 842 each coordinate Mo-bis(molybdopterin guanine dinucleotide).

Belongs to the prokaryotic molybdopterin-containing oxidoreductase family. NasA/NapA/NarB subfamily. Component of the periplasmic nitrate reductase NapAB complex composed of NapA and NapB. It depends on [4Fe-4S] cluster as a cofactor. The cofactor is Mo-bis(molybdopterin guanine dinucleotide). In terms of processing, predicted to be exported by the Tat system. The position of the signal peptide cleavage has not been experimentally proven.

The protein localises to the periplasm. The catalysed reaction is 2 Fe(II)-[cytochrome] + nitrate + 2 H(+) = 2 Fe(III)-[cytochrome] + nitrite + H2O. Its function is as follows. Catalytic subunit of the periplasmic nitrate reductase complex NapAB. Receives electrons from NapB and catalyzes the reduction of nitrate to nitrite. This Leptothrix cholodnii (strain ATCC 51168 / LMG 8142 / SP-6) (Leptothrix discophora (strain SP-6)) protein is Periplasmic nitrate reductase.